We begin with the raw amino-acid sequence, 468 residues long: Soluble pyridine nucleotide transhydrogenase (468 aa).

38–47 (ERHYNVGGGC) is a binding site for FAD.

This sequence belongs to the class-I pyridine nucleotide-disulfide oxidoreductase family. It depends on FAD as a cofactor.

It localises to the cytoplasm. It catalyses the reaction NAD(+) + NADPH = NADH + NADP(+). Its function is as follows. Conversion of NADPH, generated by peripheral catabolic pathways, to NADH, which can enter the respiratory chain for energy generation. The chain is Soluble pyridine nucleotide transhydrogenase from Pectobacterium atrosepticum (strain SCRI 1043 / ATCC BAA-672) (Erwinia carotovora subsp. atroseptica).